Reading from the N-terminus, the 416-residue chain is Esterase FrsA (416 aa).

Residues 19–39 are disordered; sequence ETSTLVRRTRHDQETQGLHST.

This sequence belongs to the FrsA family.

The catalysed reaction is a carboxylic ester + H2O = an alcohol + a carboxylate + H(+). In terms of biological role, catalyzes the hydrolysis of esters. The chain is Esterase FrsA from Pectobacterium atrosepticum (strain SCRI 1043 / ATCC BAA-672) (Erwinia carotovora subsp. atroseptica).